The following is a 280-amino-acid chain: Energy-coupling factor transporter ATP-binding protein EcfA1 (280 aa).

An ABC transporter domain is found at 6–241 (IELKNVTFRY…GDELLDLGLD (236 aa)). 41 to 48 (GHNGSGKS) is a binding site for ATP.

It belongs to the ABC transporter superfamily. Energy-coupling factor EcfA family. Forms a stable energy-coupling factor (ECF) transporter complex composed of 2 membrane-embedded substrate-binding proteins (S component), 2 ATP-binding proteins (A component) and 2 transmembrane proteins (T component).

The protein localises to the cell membrane. Its function is as follows. ATP-binding (A) component of a common energy-coupling factor (ECF) ABC-transporter complex. Unlike classic ABC transporters this ECF transporter provides the energy necessary to transport a number of different substrates. The polypeptide is Energy-coupling factor transporter ATP-binding protein EcfA1 (Streptococcus mutans serotype c (strain ATCC 700610 / UA159)).